The sequence spans 346 residues: MARPGQRWLGKWLVAMVVWALCRLATPLAKNLEPVSWSSLNPKFLSGKGLVIYPKIGDKLDIICPRAEAGRPYEYYKLYLVRPEQAAACSTVLDPNVLVTCNRPEQEIRFTIKFQEFSPNYMGLEFKKHHDYYITSTSNGSLEGLENREGGVCRTRTMKIIMKVGQDPNAVTPEQLTTSRPSKEADNTVKMATQAPGSRGSLGDSDGKHETVNQEEKSGPGASGGSSGDPDGFFNSKVALFAAVGAGCVIFLLIIIFLTVLLLKLRKRHRKHTQQRAAALSLSTLASPKGGSGTAGTEPSDIIIPLRTTENNYCPHYEKVSGDYGHPVYIVQEMPPQSPANIYYKV.

Residues 1–27 form the signal peptide; that stretch reads MARPGQRWLGKWLVAMVVWALCRLATP. Topologically, residues 28–237 are extracellular; sequence LAKNLEPVSW…GDPDGFFNSK (210 aa). Residues 30–164 form the Ephrin RBD domain; that stretch reads KNLEPVSWSS…TRTMKIIMKV (135 aa). Disulfide bonds link Cys-64–Cys-101 and Cys-89–Cys-153. The N-linked (GlcNAc...) asparagine glycan is linked to Asn-139. Positions 169-228 are disordered; it reads NAVTPEQLTTSRPSKEADNTVKMATQAPGSRGSLGDSDGKHETVNQEEKSGPGASGGSSG. A compositionally biased stretch (basic and acidic residues) spans 205–218; that stretch reads SDGKHETVNQEEKS. The chain crosses the membrane as a helical span at residues 238 to 258; it reads VALFAAVGAGCVIFLLIIIFL. Residues 259 to 346 are Cytoplasmic-facing; the sequence is TVLLLKLRKR…QSPANIYYKV (88 aa). Residues 260-273 carry the Nuclear localization signal motif; that stretch reads VLLLKLRKRHRKHT. The tract at residues 263-294 is interaction with ZHX2; sequence LKLRKRHRKHTQQRAAALSLSTLASPKGGSGT. Phosphoserine occurs at positions 281 and 287. A PDZ-binding motif is present at residues 344 to 346; it reads YKV.

This sequence belongs to the ephrin family. In terms of assembly, interacts (via PDZ-binding motif) with GRIP1 and GRIP2 (via PDZ domain 6). Interacts with TLE1. The intracellular domain peptide interacts with ZHX2; the interaction enhances ZHX2 transcriptional repression activity. Inducible phosphorylation of tyrosine residues in the cytoplasmic domain. In terms of processing, proteolytically processed. The ectodomain is cleaved, probably by a metalloprotease, to produce a membrane-tethered C-terminal fragment. This fragment is then further processed by the gamma-secretase complex to yield a soluble intracellular domain peptide which can translocate to the nucleus. The intracellular domain peptide is highly labile suggesting that it is targeted for degradation by the proteasome. As to expression, widely expressed. Detected in both neuronal and non-neuronal tissues. Seems to have particularly strong expression in retina, sciatic nerve, heart and spinal cord.

The protein resides in the cell membrane. It is found in the membrane raft. Its subcellular location is the nucleus. Cell surface transmembrane ligand for Eph receptors, a family of receptor tyrosine kinases which are crucial for migration, repulsion and adhesion during neuronal, vascular and epithelial development. Binding to Eph receptors residing on adjacent cells leads to contact-dependent bidirectional signaling into neighboring cells. Shows high affinity for the receptor tyrosine kinase EPHB1/ELK. Can also bind EPHB2 and EPHB3. Binds to, and induces collapse of, commissural axons/growth cones in vitro. May play a role in constraining the orientation of longitudinally projecting axons. The sequence is that of Ephrin-B1 (EFNB1) from Homo sapiens (Human).